A 281-amino-acid chain; its full sequence is uncharacterized protein (281 aa).

It localises to the plastid. The protein resides in the chloroplast. This is an uncharacterized protein from Euglena gracilis.